A 418-amino-acid polypeptide reads, in one-letter code: AA11 family lytic polysaccharide monooxygenase B (418 aa).

The N-terminal stretch at 1–21 is a signal peptide; the sequence is MMFSKSGLVAVAMLGASAVEA. Residues H22 and H82 each coordinate Cu(+). Disulfide bonds link C50–C165, C87–C113, and C206–C240. Residues N120 and N134 are each glycosylated (N-linked (GlcNAc...) asparagine). The disordered stretch occupies residues 226–345; the sequence is DGNPSNLQPA…SSSSSNGALT (120 aa). Positions 254–345 are enriched in low complexity; it reads SPSTPSTSSS…SSSSSNGALT (92 aa).

Belongs to the polysaccharide monooxygenase AA11 family. Cu(2+) serves as cofactor.

It is found in the secreted. Functionally, lytic polysaccharide monooxygenase (LPMO)-like protein that acts as a strict peroxygenase and does not catalyze a monooxygenase reaction. It is indeed hardly active on chitin, while being very active on soluble oligomers of N-acetylglucosamine. Cleaves the glycosidic bonds byoxidizing the C1 position. Also unable to oxidize cellopentaose. Probably breaks glycosidic bonds in non-polymeric substrates possibly carbohydrates in the cell wall of the fungus or its competitors. In the presence of chitotetraose, the enzyme can withstand considerable amounts of H(2)O(2), which it uses to efficiently and stoichiometrically convert this substrate. The polypeptide is AA11 family lytic polysaccharide monooxygenase B (Aspergillus fumigatus (strain ATCC MYA-4609 / CBS 101355 / FGSC A1100 / Af293) (Neosartorya fumigata)).